Here is a 106-residue protein sequence, read N- to C-terminus: UPF0145 protein PputW619_2377 (106 aa).

The protein belongs to the UPF0145 family.

This chain is UPF0145 protein PputW619_2377, found in Pseudomonas putida (strain W619).